Here is a 427-residue protein sequence, read N- to C-terminus: Glutamate-1-semialdehyde 2,1-aminomutase (427 aa).

At Lys265 the chain carries N6-(pyridoxal phosphate)lysine.

This sequence belongs to the class-III pyridoxal-phosphate-dependent aminotransferase family. HemL subfamily. In terms of assembly, homodimer. Requires pyridoxal 5'-phosphate as cofactor.

Its subcellular location is the cytoplasm. The catalysed reaction is (S)-4-amino-5-oxopentanoate = 5-aminolevulinate. The protein operates within porphyrin-containing compound metabolism; protoporphyrin-IX biosynthesis; 5-aminolevulinate from L-glutamyl-tRNA(Glu): step 2/2. The chain is Glutamate-1-semialdehyde 2,1-aminomutase from Neisseria meningitidis serogroup A / serotype 4A (strain DSM 15465 / Z2491).